A 578-amino-acid polypeptide reads, in one-letter code: Solute carrier family 15 member 3 (578 aa).

Residues methionine 1 to glutamate 15 show a composition bias toward basic and acidic residues. The tract at residues methionine 1–proline 27 is disordered. 5 helical membrane-spanning segments follow: residues threonine 33–threonine 53, leucine 77–tyrosine 97, leucine 102–isoleucine 122, proline 155–valine 175, and tryptophan 201–glutamate 221. An N-linked (GlcNAc...) asparagine glycan is attached at asparagine 223. The helical transmembrane segment at isoleucine 232 to isoleucine 252 threads the bilayer. The interval serine 280–proline 301 is disordered. The chain crosses the membrane as a helical span at residues phenylalanine 308–tyrosine 328. Residue asparagine 353 is glycosylated (N-linked (GlcNAc...) asparagine). A run of 2 helical transmembrane segments spans residues isoleucine 367–lysine 387 and leucine 405–leucine 425. N-linked (GlcNAc...) asparagine glycosylation occurs at asparagine 436. The next 3 membrane-spanning stretches (helical) occupy residues tyrosine 462–tyrosine 481, glycine 494–leucine 514, and tyrosine 538–glycine 558.

It belongs to the major facilitator superfamily. Proton-dependent oligopeptide transporter (POT/PTR) (TC 2.A.17) family. As to expression, expressed highly in bone marrow derived macrophages, and weakly in spleen and lung. Expressed in plasmacytoid dendritic cells (pDCs) in response to toll-like receptors (TLR) stimulation.

It localises to the lysosome membrane. Its subcellular location is the endosome membrane. The enzyme catalyses N-acetyl-D-muramoyl-L-alanyl-D-isoglutamine(out) + n H(+)(out) = N-acetyl-D-muramoyl-L-alanyl-D-isoglutamine(in) + n H(+)(in). It carries out the reaction glycylglycylglycine(out) + n H(+)(out) = glycylglycylglycine(in) + n H(+)(in). The catalysed reaction is carnosine(out) + n H(+)(out) = carnosine(in) + n H(+)(in). It catalyses the reaction L-histidine(out) + n H(+)(out) = L-histidine(in) + n H(+)(in). Its function is as follows. Proton-coupled amino-acid transporter that transports free histidine and certain di- and tripeptides, and is involved in innate immune response. Also able to transport carnosine. Involved in the detection of microbial pathogens by toll-like receptors (TLRs) and NOD-like receptors (NLRs), probably by mediating transport of bacterial peptidoglycans across the endolysosomal membrane: catalyzes the transport of certain bacterial peptidoglycans, such as muramyl dipeptide (MDP), the NOD2 ligand. This is Solute carrier family 15 member 3 from Mus musculus (Mouse).